Reading from the N-terminus, the 433-residue chain is Agnestins efflux protein AgnL12 (433 aa).

Polar residues-rich tracts occupy residues 1 to 10 (MSRSTSTELQ) and 25 to 40 (SIAS…PPST). The segment at 1–40 (MSRSTSTELQQELPASKEVPPDPTSIASSETASGSKPPST) is disordered. Transmembrane regions (helical) follow at residues 47 to 67 (ILVL…TNAF), 87 to 107 (ISWI…ISGY), 116 to 136 (LLIC…SLST), 141 to 161 (IFLT…LPAM), 174 to 194 (LAMG…PIAL), 205 to 225 (WTVR…CLAI), 248 to 268 (VMIF…SPFF), 285 to 305 (FYMV…PGLI), 309 to 329 (VGNY…ACCW), 335 to 355 (VGGI…VISL), 370 to 390 (GVAM…GTPI), and 401 to 421 (LGLS…ILLA).

It belongs to the major facilitator superfamily. Monocarboxylate porter (TC 2.A.1.13) family.

The protein localises to the cell membrane. Efflux pump that may be involved in the secretion of agnestins, dihydroxy-xanthone metabolites. In Paecilomyces divaricatus (Penicillium divaricatum), this protein is Agnestins efflux protein AgnL12.